Here is a 179-residue protein sequence, read N- to C-terminus: Probable chemoreceptor glutamine deamidase CheD 2 (179 aa).

It belongs to the CheD family.

It carries out the reaction L-glutaminyl-[protein] + H2O = L-glutamyl-[protein] + NH4(+). Probably deamidates glutamine residues to glutamate on methyl-accepting chemotaxis receptors (MCPs), playing an important role in chemotaxis. In Ruegeria sp. (strain TM1040) (Silicibacter sp.), this protein is Probable chemoreceptor glutamine deamidase CheD 2.